The primary structure comprises 106 residues: Small ribosomal subunit protein uS10 (106 aa).

The protein belongs to the universal ribosomal protein uS10 family. Part of the 30S ribosomal subunit.

Its function is as follows. Involved in the binding of tRNA to the ribosomes. The polypeptide is Small ribosomal subunit protein uS10 (Pyrobaculum calidifontis (strain DSM 21063 / JCM 11548 / VA1)).